We begin with the raw amino-acid sequence, 225 residues long: NAD(P)H-quinone oxidoreductase subunit K, chloroplastic (225 aa).

Residues C43, C44, C108, and C139 each coordinate [4Fe-4S] cluster.

It belongs to the complex I 20 kDa subunit family. In terms of assembly, NDH is composed of at least 16 different subunits, 5 of which are encoded in the nucleus. The cofactor is [4Fe-4S] cluster.

The protein localises to the plastid. It localises to the chloroplast thylakoid membrane. The enzyme catalyses a plastoquinone + NADH + (n+1) H(+)(in) = a plastoquinol + NAD(+) + n H(+)(out). The catalysed reaction is a plastoquinone + NADPH + (n+1) H(+)(in) = a plastoquinol + NADP(+) + n H(+)(out). NDH shuttles electrons from NAD(P)H:plastoquinone, via FMN and iron-sulfur (Fe-S) centers, to quinones in the photosynthetic chain and possibly in a chloroplast respiratory chain. The immediate electron acceptor for the enzyme in this species is believed to be plastoquinone. Couples the redox reaction to proton translocation, and thus conserves the redox energy in a proton gradient. This is NAD(P)H-quinone oxidoreductase subunit K, chloroplastic from Agrostis stolonifera (Creeping bentgrass).